A 392-amino-acid chain; its full sequence is MYKRSLIAASLSVAALVSAQAMAEINGGGATLPQQLYQEPGVLTAGFAAYIGAGSGNGKAAFLNNDYTKFVAGTTNKNVHWAGSDSKLSKTNETNPYLSAHGSAWGPLIQVPSVATSVALPFNKSGSNAVNFADVNTLCGVFSGRLTDWSQIPGSGRSGAITVAYRSESSGTTELFTRFLNASCSSALEGGTFAITTSFGNSFSGGLPAGAVSAQGSQAVMNTLNAAEGRITYMSPDFAAPTLAGLDDATKVAQVRGVSPAPANVSAAIGAVTPPTTAQRSDPNNWVPVFAATASATDPSVRPYPTTGYPILGFTNLIFSQCYADATQTQQVRDFFTRHYGASVNNDTAITNHRFVPLPASWKLAVRQSFLTSTNNLYIGHSNVCNGIGRPL.

Positions 1–23 are cleaved as a signal peptide; the sequence is MYKRSLIAASLSVAALVSAQAMA.

Belongs to the PstS family. As to quaternary structure, homodimer.

Its subcellular location is the secreted. The protein localises to the periplasm. The enzyme catalyses a phosphate monoester + H2O = an alcohol + phosphate. Functionally, has both a phosphomonoesterase and phosphodiesterase activity. This chain is Alkaline phosphatase L, found in Pseudomonas aeruginosa.